The following is a 332-amino-acid chain: Melanocortin receptor 4 (332 aa).

Topologically, residues methionine 1 to glutamine 43 are extracellular. N-linked (GlcNAc...) asparagine glycans are attached at residues asparagine 2, asparagine 17, and asparagine 26. Disulfide bonds link cysteine 40/cysteine 279 and cysteine 271/cysteine 277. The helical transmembrane segment at leucine 44–isoleucine 69 threads the bilayer. Residues alanine 70–phenylalanine 81 are Cytoplasmic-facing. A helical transmembrane segment spans residues phenylalanine 82 to leucine 106. Residue glutamate 100 coordinates Ca(2+). Over leucine 107–asparagine 123 the chain is Extracellular. N-linked (GlcNAc...) asparagine glycosylation is present at asparagine 108. Aspartate 122 and aspartate 126 together coordinate Ca(2+). Residues valine 124–valine 145 traverse the membrane as a helical segment. Topologically, residues aspartate 146–arginine 165 are cytoplasmic. Residues valine 166 to isoleucine 186 traverse the membrane as a helical segment. The Extracellular portion of the chain corresponds to tyrosine 187 to serine 191. Residues alanine 192–methionine 215 form a helical membrane-spanning segment. The Cytoplasmic portion of the chain corresponds to phenylalanine 216 to threonine 248. The helical transmembrane segment at isoleucine 249–cysteine 271 threads the bilayer. Residues proline 272 to phenylalanine 280 are Extracellular-facing. Residues methionine 281–leucine 304 form a helical membrane-spanning segment. The Cytoplasmic segment spans residues arginine 305–tyrosine 332. Residue cysteine 318 is the site of S-palmitoyl cysteine attachment.

It belongs to the G-protein coupled receptor 1 family. As to quaternary structure, homodimer; disulfide-linked, also forms higher order oligomers. Interacts with GNAS. Interacts with ATRNL1. Interacts with MGRN1; this interaction competes with GNAS-binding and thus inhibits agonist-induced cAMP production. Interacts with MRAP and MRAP2; these associated factors increase ligand-sensitivity and generation of cAMP.

It localises to the cell membrane. In terms of biological role, hormone receptor that acts as a key component of the leptin-melanocortin pathway at the intersection of homeostatic maintenance of energetic state. Plays a role in regulating food intake: activation by a stimulating hormone such as anorexigenic alpha-melanocyte stimulating hormone (alpha-MSH) inhibits appetite, whereas binding to a natural antagonist like Agouti-related protein/AGRP promotes appetite. G-protein-coupled receptor that activates conventional Galphas signaling leading to induction of anorexogenic signaling in the hypothalamus to result in negative energy balance. Regulates the firing activity of neurons from the hypothalamus by alpha-MSH and AGRP independently of Galphas signaling by ligand-induced coupling of closure of inwardly rectifying potassium channel KCNJ13. In intestinal epithelial cells, plays a role in the inhibition of hepatic glucose production via nesfatin-1/NUCB2 leading to increased cyclic adenosine monophosphate (cAMP) levels and glucagon-like peptide 1 (GLP-1) secretion in the intestinal epithelium. This is Melanocortin receptor 4 (Mc4r) from Mus musculus (Mouse).